A 37-amino-acid chain; its full sequence is Large ribosomal subunit protein bL36 (37 aa).

Belongs to the bacterial ribosomal protein bL36 family.

The chain is Large ribosomal subunit protein bL36 from Synechococcus sp. (strain CC9605).